The primary structure comprises 468 residues: MSKPTTLYDKIWNDHLVHEADDGTCLLYIDRHLVHEVTSPQAFEGLRATGRKVHAPEKTLAVVDHNVPTTDRTKPNPDPESIEQIKALADNAREFGIEYYNEFDKRQGIVHVIGPEQGFTLPGTTIVCGDSHTSTHGAFGALAHGIGTSEVEHVLATQTLIQKKAKNMRVTVDGKLPDGVTGKDIILAIIGEIGTAGGTGYVLEYAGEAIRALSMEGRMTVCNMSIEGGARAGLVAPDQKAYDFLRDRPKAPKGAAWDAAMRYWEKLRSDDGAHFDHELRLDAAKLPPIVTWGTSPEDVISVTGIVPDPDKIADEAKRLSKHRALKYMGLTAGTKITDIKLDRVFIGSCTNGRIEDLRAAAKIAEGKQVSASVNAMVVPGSGIVKEQAEAEGLDKIFIKAGFEWREPGCSMCLAMNPDKLKPEERCASTSNRNFEGRQGFKGRTHLVSPAMAAAAAIAGHFVDVREWR.

Residues Cys349, Cys409, and Cys412 each coordinate [4Fe-4S] cluster.

This sequence belongs to the aconitase/IPM isomerase family. LeuC type 1 subfamily. In terms of assembly, heterodimer of LeuC and LeuD. Requires [4Fe-4S] cluster as cofactor.

The catalysed reaction is (2R,3S)-3-isopropylmalate = (2S)-2-isopropylmalate. It functions in the pathway amino-acid biosynthesis; L-leucine biosynthesis; L-leucine from 3-methyl-2-oxobutanoate: step 2/4. Its function is as follows. Catalyzes the isomerization between 2-isopropylmalate and 3-isopropylmalate, via the formation of 2-isopropylmaleate. This chain is 3-isopropylmalate dehydratase large subunit 2, found in Bradyrhizobium diazoefficiens (strain JCM 10833 / BCRC 13528 / IAM 13628 / NBRC 14792 / USDA 110).